Here is a 419-residue protein sequence, read N- to C-terminus: Gustatory receptor for sugar taste 64c (419 aa).

Residues 1 to 15 (MQQSGQKGTRNTLQH) are Cytoplasmic-facing. Residues 16 to 36 (AIGPVLVIAQFFGVLPVAGVW) traverse the membrane as a helical segment. At 37–48 (PSCRPERVRFRW) the chain is on the extracellular side. A helical transmembrane segment spans residues 49–69 (ISLSLLAALILFVFSIVDCAL). The Cytoplasmic segment spans residues 70–82 (SSKVVFDHGLKIY). The helical transmembrane segment at 83–103 (TIGSLSFSVICIFCFGVFLLL) threads the bilayer. The Extracellular segment spans residues 104–139 (SRRWPYIIRRTAECEQIFLEPEYDCSYGRGYSSRLR). Residues 140-160 (LWGVCMLVAALCEHSTYVGSA) form a helical membrane-spanning segment. At 161–204 (LYNNHLAIVECKLDANFWQNYFQRERQQLFLIMHFTAWWIPFIE) the chain is on the cytoplasmic side. The chain crosses the membrane as a helical span at residues 205–225 (WTTLSMTFVWNFVDIFLILIC). Residues 226-305 (RGMQMRFQQM…FQSKGNYADE (80 aa)) are Extracellular-facing. A helical membrane pass occupies residues 306 to 326 (LYFWFCLSYVIIRVLNMMFAA). The Cytoplasmic segment spans residues 327–377 (SSIPQEAKEISYTLYEIPTEFWCVELRRLNEIFLSDHFALSGKGYFLLTRR). A helical transmembrane segment spans residues 378–398 (LIFAMAATLMVYELVLINQMA). At 399 to 419 (GSEVQKSFCEGGVGSSKSIFS) the chain is on the extracellular side.

This sequence belongs to the insect chemoreceptor superfamily. Gustatory receptor (GR) family. Gr5a subfamily. Expressed in Gr5a-expressing sugar-sensing cells.

Its subcellular location is the cell membrane. Its function is as follows. One of the few identified sugar gustatory receptors identified so far and which promotes the starvation-induced increase of feeding motivation. The chain is Gustatory receptor for sugar taste 64c (Gr64c) from Drosophila melanogaster (Fruit fly).